The primary structure comprises 567 residues: Dihydroxy-acid dehydratase 3 (567 aa).

Residue cysteine 57 coordinates [2Fe-2S] cluster. Aspartate 89 contributes to the Mg(2+) binding site. [2Fe-2S] cluster is bound at residue cysteine 130. Residues aspartate 131 and lysine 132 each coordinate Mg(2+). Residue lysine 132 is modified to N6-carboxylysine. Cysteine 202 lines the [2Fe-2S] cluster pocket. Glutamate 454 lines the Mg(2+) pocket. Catalysis depends on serine 480, which acts as the Proton acceptor.

This sequence belongs to the IlvD/Edd family. As to quaternary structure, homodimer. [2Fe-2S] cluster serves as cofactor. It depends on Mg(2+) as a cofactor.

It catalyses the reaction (2R)-2,3-dihydroxy-3-methylbutanoate = 3-methyl-2-oxobutanoate + H2O. The catalysed reaction is (2R,3R)-2,3-dihydroxy-3-methylpentanoate = (S)-3-methyl-2-oxopentanoate + H2O. Its pathway is amino-acid biosynthesis; L-isoleucine biosynthesis; L-isoleucine from 2-oxobutanoate: step 3/4. It functions in the pathway amino-acid biosynthesis; L-valine biosynthesis; L-valine from pyruvate: step 3/4. Its function is as follows. Functions in the biosynthesis of branched-chain amino acids. Catalyzes the dehydration of (2R,3R)-2,3-dihydroxy-3-methylpentanoate (2,3-dihydroxy-3-methylvalerate) into 2-oxo-3-methylpentanoate (2-oxo-3-methylvalerate) and of (2R)-2,3-dihydroxy-3-methylbutanoate (2,3-dihydroxyisovalerate) into 2-oxo-3-methylbutanoate (2-oxoisovalerate), the penultimate precursor to L-isoleucine and L-valine, respectively. This chain is Dihydroxy-acid dehydratase 3, found in Aromatoleum aromaticum (strain DSM 19018 / LMG 30748 / EbN1) (Azoarcus sp. (strain EbN1)).